An 86-amino-acid polypeptide reads, in one-letter code: Exodeoxyribonuclease 7 small subunit (86 aa).

The disordered stretch occupies residues 67–86; sequence RVSPASGGATEAPAPAERDR.

Belongs to the XseB family. As to quaternary structure, heterooligomer composed of large and small subunits.

It localises to the cytoplasm. It carries out the reaction Exonucleolytic cleavage in either 5'- to 3'- or 3'- to 5'-direction to yield nucleoside 5'-phosphates.. Its function is as follows. Bidirectionally degrades single-stranded DNA into large acid-insoluble oligonucleotides, which are then degraded further into small acid-soluble oligonucleotides. In Beutenbergia cavernae (strain ATCC BAA-8 / DSM 12333 / CCUG 43141 / JCM 11478 / NBRC 16432 / NCIMB 13614 / HKI 0122), this protein is Exodeoxyribonuclease 7 small subunit.